The following is a 304-amino-acid chain: Olfactory receptor 4K13 (304 aa).

At 1 to 25 (MERANHSVVSEFILLGLSKSQNLQI) the chain is on the extracellular side. N-linked (GlcNAc...) asparagine glycosylation occurs at asparagine 5. A helical transmembrane segment spans residues 26–49 (LFFLGFSVVFVGIVLGNLLILVTV). Over 50–57 (TFDSLLHT) the chain is Cytoplasmic. The chain crosses the membrane as a helical span at residues 58-79 (PMYFLLSNLSCIDMILASFATP). Residues 80–100 (KMIVDFLRERKTISWWGCYSQ) are Extracellular-facing. Cysteine 97 and cysteine 189 are disulfide-bonded. The chain crosses the membrane as a helical span at residues 101–120 (MFFMHLLGGSEMMLLVAMAI). Residues 121–139 (DRYVAICKPLHYMTIMSPR) lie on the Cytoplasmic side of the membrane. The helical transmembrane segment at 140–158 (VLTGLLLSSYAVGFVHSSS) threads the bilayer. The Extracellular segment spans residues 159 to 195 (QMAFMLTLPFCGPNVIDSFFCDLPLVIKLACKDTYIL). Residues 196 to 219 (QLLVIADSGLLSLVCFLLLLVSYG) form a helical membrane-spanning segment. Residues 220 to 235 (VIIFSVRYRAASRSSK) are Cytoplasmic-facing. A helical transmembrane segment spans residues 236–258 (AFSTLSAHITVVTLFFAPCVFIY). Residues 259-269 (VWPFSRYSVDK) lie on the Extracellular side of the membrane. A helical membrane pass occupies residues 270-289 (ILSVFYTIFTPLLNPIIYTL). The Cytoplasmic segment spans residues 290 to 304 (RNQEVKAAIKKRLCI).

Belongs to the G-protein coupled receptor 1 family.

The protein resides in the cell membrane. In terms of biological role, odorant receptor. This is Olfactory receptor 4K13 (OR4K13) from Homo sapiens (Human).